The chain runs to 468 residues: ATP synthase subunit beta (468 aa).

153 to 160 (GGAGVGKT) lines the ATP pocket.

Belongs to the ATPase alpha/beta chains family. In terms of assembly, F-type ATPases have 2 components, CF(1) - the catalytic core - and CF(0) - the membrane proton channel. CF(1) has five subunits: alpha(3), beta(3), gamma(1), delta(1), epsilon(1). CF(0) has three main subunits: a(1), b(2) and c(9-12). The alpha and beta chains form an alternating ring which encloses part of the gamma chain. CF(1) is attached to CF(0) by a central stalk formed by the gamma and epsilon chains, while a peripheral stalk is formed by the delta and b chains.

It is found in the cell inner membrane. It catalyses the reaction ATP + H2O + 4 H(+)(in) = ADP + phosphate + 5 H(+)(out). Produces ATP from ADP in the presence of a proton gradient across the membrane. The catalytic sites are hosted primarily by the beta subunits. This is ATP synthase subunit beta from Nautilia profundicola (strain ATCC BAA-1463 / DSM 18972 / AmH).